A 630-amino-acid chain; its full sequence is tRNA uridine 5-carboxymethylaminomethyl modification enzyme MnmG (630 aa).

13–18 (GGGHAG) serves as a coordination point for FAD. Residue 273-287 (GPRYCPSIEDKVMRF) coordinates NAD(+).

Belongs to the MnmG family. As to quaternary structure, homodimer. Heterotetramer of two MnmE and two MnmG subunits. FAD serves as cofactor.

Its subcellular location is the cytoplasm. Its function is as follows. NAD-binding protein involved in the addition of a carboxymethylaminomethyl (cmnm) group at the wobble position (U34) of certain tRNAs, forming tRNA-cmnm(5)s(2)U34. The polypeptide is tRNA uridine 5-carboxymethylaminomethyl modification enzyme MnmG (Actinobacillus pleuropneumoniae serotype 5b (strain L20)).